Reading from the N-terminus, the 138-residue chain is Basic phospholipase A2 Tpu-G6D49 (138 aa).

A signal peptide spans 1-16 (MRTLWIMAVLLVGVEG). Cystine bridges form between C42–C131, C44–C60, C59–C111, C65–C138, C66–C104, C73–C97, and C91–C102. Residues Y43, G45, and G47 each contribute to the Ca(2+) site. H63 is an active-site residue. D64 serves as a coordination point for Ca(2+). The active site involves D105.

As to quaternary structure, monomer. Ca(2+) serves as cofactor. In terms of tissue distribution, expressed by the venom gland.

It is found in the secreted. It catalyses the reaction a 1,2-diacyl-sn-glycero-3-phosphocholine + H2O = a 1-acyl-sn-glycero-3-phosphocholine + a fatty acid + H(+). In terms of biological role, snake venom phospholipase A2 (PLA2) that impairs hemostasis. It weakly inhibits ADP-induced platelet aggregation when tested on platelet rich plasma from human and rabbit blood (15-25% of inhibition at 5-10 ug of enzyme), and dose-dependently inhibits blood coagulation, possibly by inhibiting thrombin activation. Also induces local edema a few hours after injection in the hind foot. Exhibits high hydrolytic activities toward L-dipalmitoyl phosphatidylcholine. PLA2 catalyzes the calcium-dependent hydrolysis of the 2-acyl groups in 3-sn-phosphoglycerides. The polypeptide is Basic phospholipase A2 Tpu-G6D49 (Craspedocephalus puniceus (Flat-nosed pitviper)).